Here is a 450-residue protein sequence, read N- to C-terminus: Phosphoglucosamine mutase 2 (450 aa).

Residue S101 is the Phosphoserine intermediate of the active site. Mg(2+) contacts are provided by S101, D245, D247, and D249. S101 carries the phosphoserine modification.

This sequence belongs to the phosphohexose mutase family. Mg(2+) is required as a cofactor. Activated by phosphorylation.

The catalysed reaction is alpha-D-glucosamine 1-phosphate = D-glucosamine 6-phosphate. In terms of biological role, catalyzes the conversion of glucosamine-6-phosphate to glucosamine-1-phosphate. This is Phosphoglucosamine mutase 2 from Shewanella sp. (strain MR-4).